Here is a 356-residue protein sequence, read N- to C-terminus: Probable arabinogalactan endo-beta-1,4-galactanase A (356 aa).

The signal sequence occupies residues 1–21 (MLGKMILLPLFVLLCHSLASA). A glycan (N-linked (GlcNAc...) asparagine) is linked at N133. E157 serves as the catalytic Proton donor. E268 acts as the Nucleophile in catalysis.

This sequence belongs to the glycosyl hydrolase 53 family.

The protein resides in the secreted. The enzyme catalyses The enzyme specifically hydrolyzes (1-&gt;4)-beta-D-galactosidic linkages in type I arabinogalactans.. Functionally, endogalactanase involved in the degradation of plant cell wall polysaccharides, and more particularly of hairy regions of pectin. This Neosartorya fischeri (strain ATCC 1020 / DSM 3700 / CBS 544.65 / FGSC A1164 / JCM 1740 / NRRL 181 / WB 181) (Aspergillus fischerianus) protein is Probable arabinogalactan endo-beta-1,4-galactanase A (galA).